A 135-amino-acid chain; its full sequence is Large ribosomal subunit protein uL16c (135 aa).

Belongs to the universal ribosomal protein uL16 family. Part of the 50S ribosomal subunit.

It is found in the plastid. The protein resides in the chloroplast. In Panax ginseng (Korean ginseng), this protein is Large ribosomal subunit protein uL16c.